Here is a 355-residue protein sequence, read N- to C-terminus: Ubiquinone biosynthesis protein COQ4 homolog, mitochondrial (355 aa).

His134, Asp135, His138, and Glu150 together coordinate Zn(2+).

This sequence belongs to the COQ4 family. In terms of assembly, component of a multi-subunit COQ enzyme complex. Zn(2+) is required as a cofactor.

The protein localises to the mitochondrion inner membrane. The enzyme catalyses a 4-hydroxy-3-methoxy-5-(all-trans-polyprenyl)benzoate + H(+) = a 2-methoxy-6-(all-trans-polyprenyl)phenol + CO2. It participates in cofactor biosynthesis; ubiquinone biosynthesis. Functionally, lyase that catalyzes the C1-decarboxylation of 4-hydroxy-3-methoxy-5-(all-trans-polyprenyl)benzoic acid into 2-methoxy-6-(all-trans-polyprenyl)phenol during ubiquinone biosynthesis. This chain is Ubiquinone biosynthesis protein COQ4 homolog, mitochondrial, found in Plasmodium falciparum (isolate 3D7).